Consider the following 282-residue polypeptide: Pseudokinase OPG198 (282 aa).

Positions 1 and 30 each coordinate ATP. In terms of domain architecture, Protein kinase spans 1-282 (MESFKYCFDN…DRLRRLFIQD (282 aa)).

This sequence belongs to the protein kinase superfamily. Ser/Thr protein kinase family. Poxviruses subfamily. In terms of assembly, interacts with B1/VPK1. Interacts with host VRK1. Interacts with host VRK2.

It localises to the host nucleus. With respect to regulation, both catalytically active kinases B1/VPK1 and host VRK2 repress B12 inhibitory activity in a B1/VPK1 deletion mutant strain. In terms of biological role, pseudokinase that plays a role in viral DNA replication repression by activating the antiviral protein BANF1 and inhibiting the activity of host VRK1, a cellular modulator of BANF1. The sequence is that of Pseudokinase OPG198 (OPG198) from Cynomys gunnisoni (Gunnison's prairie dog).